Consider the following 254-residue polypeptide: MLSLVGLGPGRGYVTEAAAEAIKNADCVFYEDYTAPLDVEALRRLARGEPIRLTRADLEDHSGRKIFECLKEGKRAVLVTGGDPMLATAHAAILALARRRGYRVEVVPGVSIICAAFSLSCLSIYKLGGVATVTYPRGGVYSTRPYDLVEQNLQRGLHTLLLLDVREDGRFMPPREGAEVLLQLEERVGRGLFKEDLPIVVVYKVGWGGSAVYATLGEIARSDLEGPAVFIVPSRLGPVEKECLEGLSARSSTR.

Residues Asp83, Leu86, 111–112 (SI), Leu163, and Val205 each bind S-adenosyl-L-methionine.

Belongs to the diphthine synthase family. As to quaternary structure, homodimer.

The enzyme catalyses 2-[(3S)-amino-3-carboxypropyl]-L-histidyl-[translation elongation factor 2] + 3 S-adenosyl-L-methionine = diphthine-[translation elongation factor 2] + 3 S-adenosyl-L-homocysteine + 3 H(+). It participates in protein modification; peptidyl-diphthamide biosynthesis. S-adenosyl-L-methionine-dependent methyltransferase that catalyzes the trimethylation of the amino group of the modified target histidine residue in translation elongation factor 2 (EF-2), to form an intermediate called diphthine. The three successive methylation reactions represent the second step of diphthamide biosynthesis. In Pyrobaculum aerophilum (strain ATCC 51768 / DSM 7523 / JCM 9630 / CIP 104966 / NBRC 100827 / IM2), this protein is Diphthine synthase.